Reading from the N-terminus, the 477-residue chain is Myc-associated zinc finger protein (477 aa).

Disordered stretches follow at residues 59-78 (AQSP…APAA) and 121-146 (TVDT…PAAE). The segment covering 130–141 (PPAPPPPPPPVS) has biased composition (pro residues). C2H2-type zinc fingers lie at residues 190–212 (YICA…EAIH), 279–301 (HACE…KLSH), 307–329 (YQCP…VRSH), and 337–360 (YNCS…RQVH). Position 361 is a phosphoserine (serine 361). Residues 366–388 (FKCEKCEAAFATKDRLRAHTVRH) form a C2H2-type 5 zinc finger. Residues 392–413 (VPCHVCGKMLSSAYISDHMKVH) form a C2H2-type 6; atypical zinc finger.

In terms of assembly, interacts with BPTF. Forms a heterodimer with MAZ isoform 2; the interaction inhibits MAZ isoform 1-mediated transcription activation. As to quaternary structure, forms a heterodimer with MAZ isoform 1; the interaction inhibits MAZ isoform 1-mediated transcription activation. Present in kidney, liver and brain. In the brain, highest levels are found in motor cortex and midfrontal cortex (at protein level). In terms of tissue distribution, expressed in the heart, brain, placenta, lung, liver, skeletal muscle and weakly expressed in the kidney. Expressed in the joint synovium.

It localises to the nucleus. Transcriptional regulator, potentially with dual roles in transcription initiation and termination. In terms of biological role, binds DNA and functions as a transcriptional activator. Binds to two G/A-rich sites, ME1a1 and ME1a2, within the MYC promoter having greater affinity for the former. Also binds to multiple G/C-rich sites within the promoter of the Sp1 family of transcription factors. Its function is as follows. Binds DNA and functions as a transcriptional activator. Inhibits MAZ isoform 1-mediated transcription. Functionally, binds DNA and functions as a transcriptional activator. This is Myc-associated zinc finger protein (MAZ) from Homo sapiens (Human).